The primary structure comprises 451 residues: uncharacterized protein (451 aa).

Mn(2+)-binding residues include D305, D316, H384, E414, and E428.

The protein belongs to the peptidase M24B family. The cofactor is Mn(2+).

This is an uncharacterized protein from Schizosaccharomyces pombe (strain 972 / ATCC 24843) (Fission yeast).